The primary structure comprises 487 residues: Betaine aldehyde dehydrogenase 1 (487 aa).

Residues S26, I27, and D93 each contribute to the K(+) site. 150-152 (GAW) serves as a coordination point for NAD(+). K162 functions as the Charge relay system in the catalytic mechanism. Residues 176–179 (KPSE) and 229–232 (SVPT) contribute to the NAD(+) site. Position 244 (L244) interacts with K(+). The Proton acceptor role is filled by E250. 3 residues coordinate NAD(+): G252, C284, and E384. C284 serves as the catalytic Nucleophile. Position 284 is a cysteine sulfenic acid (-SOH) (C284). K(+) is bound by residues K454 and G457. E461 serves as the catalytic Charge relay system.

It belongs to the aldehyde dehydrogenase family. As to quaternary structure, dimer of dimers. K(+) is required as a cofactor.

The catalysed reaction is betaine aldehyde + NAD(+) + H2O = glycine betaine + NADH + 2 H(+). The protein operates within amine and polyamine biosynthesis; betaine biosynthesis via choline pathway; betaine from betaine aldehyde: step 1/1. Functionally, involved in the biosynthesis of the osmoprotectant glycine betaine. Catalyzes the irreversible oxidation of betaine aldehyde to the corresponding acid. This Rhizobium meliloti (strain 1021) (Ensifer meliloti) protein is Betaine aldehyde dehydrogenase 1.